Reading from the N-terminus, the 180-residue chain is Large ribosomal subunit protein uL5 (180 aa).

Belongs to the universal ribosomal protein uL5 family. In terms of assembly, part of the 50S ribosomal subunit; part of the 5S rRNA/L5/L18/L25 subcomplex. Contacts the 5S rRNA and the P site tRNA. Forms a bridge to the 30S subunit in the 70S ribosome.

Its function is as follows. This is one of the proteins that bind and probably mediate the attachment of the 5S RNA into the large ribosomal subunit, where it forms part of the central protuberance. In the 70S ribosome it contacts protein S13 of the 30S subunit (bridge B1b), connecting the 2 subunits; this bridge is implicated in subunit movement. Contacts the P site tRNA; the 5S rRNA and some of its associated proteins might help stabilize positioning of ribosome-bound tRNAs. The sequence is that of Large ribosomal subunit protein uL5 from Gloeothece citriformis (strain PCC 7424) (Cyanothece sp. (strain PCC 7424)).